Consider the following 535-residue polypeptide: Arylsulfatase K (535 aa).

Residues 1–21 (MGSGGPLLLLRGLLLVGAAYC) form the signal peptide. Residues Asp41 and Cys81 each contribute to the Ca(2+) site. Cys81 (nucleophile) is an active-site residue. A 3-oxoalanine (Cys) modification is found at Cys81. Lys129 provides a ligand contact to substrate. N-linked (GlcNAc...) asparagine glycosylation is present at Asn194. Position 252 (His252) interacts with substrate. Asn263 carries an N-linked (GlcNAc...) asparagine glycan. Ca(2+)-binding residues include Asp314 and His315. Residues Asn376, Asn414, and Asn499 are each glycosylated (N-linked (GlcNAc...) asparagine).

Belongs to the sulfatase family. It depends on Ca(2+) as a cofactor. In terms of processing, the conversion to 3-oxoalanine (also known as C-formylglycine, FGly), of a serine or cysteine residue in prokaryotes and of a cysteine residue in eukaryotes, is critical for catalytic activity.

The protein resides in the secreted. The protein localises to the lysosome. The catalysed reaction is an aryl sulfate + H2O = a phenol + sulfate + H(+). It carries out the reaction Hydrolysis of the 2-sulfate groups of the 2-O-sulfo-D-glucuronate residues of chondroitin sulfate, heparin and heparitin sulfate.. Its function is as follows. Catalyzes the hydrolysis of pseudosubstrates such as p-nitrocatechol sulfate and p-nitrophenyl sulfate. Catalyzes the hydrolysis of the 2-sulfate groups of the 2-O-sulfo-D-glucuronate residues of chondroitin sulfate, heparin and heparitin sulfate. Acts selectively on 2-sulfoglucuronate and lacks activity against 2-sulfoiduronate. The sequence is that of Arylsulfatase K (ARSK) from Gallus gallus (Chicken).